The sequence spans 72 residues: Defensin 3 (72 aa).

Positions 1–25 (MEKKMAGFCIFFLVLFLAQEYGVEG) are cleaved as a signal peptide. 3 disulfide bridges follow: Cys28–Cys72, Cys39–Cys60, and Cys45–Cys66.

Belongs to the DEFL family. May form dimers. In terms of processing, not glycosylated. Has 4 disulfide bonds.

In terms of biological role, probably has antifungal activity. In Arachis hypogaea (Peanut), this protein is Defensin 3.